A 489-amino-acid chain; its full sequence is Protein SOF1 (489 aa).

7 WD repeats span residues 65–105, 113–158, 177–214, 217–257, 259–299, 303–342, and 346–385; these read GHRD…EFVS, VTGL…YSNK, DGES…PVSD, WGAD…PTQK, VQTM…RSLN, DHVS…SREI, and KRMQ…RSNV. Composition is skewed to basic and acidic residues over residues 440–459 and 466–489; these read REAN…ERKK and HKYE…TQEK. Positions 440-489 are disordered; that stretch reads REANERRTRKDMPYISERKKQIVGTVHKYEDSGRDRKRRKEDDKRDTQEK.

This sequence belongs to the WD repeat DCAF13/WDSOF1 family. As to quaternary structure, interacts with snoRNA U3. Interacts with NOP1 and MPP10. Component of the ribosomal small subunit (SSU) processome composed of at least 40 protein subunits and snoRNA U3.

It localises to the nucleus. The protein localises to the nucleolus. Required for ribosomal RNA processing. This Saccharomyces cerevisiae (strain ATCC 204508 / S288c) (Baker's yeast) protein is Protein SOF1 (SOF1).